Consider the following 295-residue polypeptide: Mediator of RNA polymerase II transcription subunit 27 (295 aa).

Belongs to the Mediator complex subunit 27 family. As to quaternary structure, component of the Mediator complex.

It is found in the nucleus. In terms of biological role, component of the Mediator complex, a coactivator involved in the regulated transcription of nearly all RNA polymerase II-dependent genes. Mediator functions as a bridge to convey information from gene-specific regulatory proteins to the basal RNA polymerase II transcription machinery. Mediator is recruited to promoters by direct interactions with regulatory proteins and serves as a scaffold for the assembly of a functional preinitiation complex with RNA polymerase II and the general transcription factors. The sequence is that of Mediator of RNA polymerase II transcription subunit 27 (MED27) from Aedes aegypti (Yellowfever mosquito).